A 258-amino-acid polypeptide reads, in one-letter code: uncharacterized protein (258 aa).

This is an uncharacterized protein from Streptococcus pneumoniae serotype 4 (strain ATCC BAA-334 / TIGR4).